A 291-amino-acid polypeptide reads, in one-letter code: ATP synthase gamma chain (291 aa).

Belongs to the ATPase gamma chain family. As to quaternary structure, F-type ATPases have 2 components, CF(1) - the catalytic core - and CF(0) - the membrane proton channel. CF(1) has five subunits: alpha(3), beta(3), gamma(1), delta(1), epsilon(1). CF(0) has three main subunits: a, b and c.

Its subcellular location is the cell membrane. Produces ATP from ADP in the presence of a proton gradient across the membrane. The gamma chain is believed to be important in regulating ATPase activity and the flow of protons through the CF(0) complex. The polypeptide is ATP synthase gamma chain (Streptococcus equi subsp. zooepidemicus (strain MGCS10565)).